Here is a 320-residue protein sequence, read N- to C-terminus: Acetyl-coenzyme A carboxylase carboxyl transferase subunit alpha (320 aa).

Positions 42-295 constitute a CoA carboxyltransferase C-terminal domain; that stretch reads IGDKAAQALK…GDAIAEAFND (254 aa).

It belongs to the AccA family. As to quaternary structure, acetyl-CoA carboxylase is a heterohexamer composed of biotin carboxyl carrier protein (AccB), biotin carboxylase (AccC) and two subunits each of ACCase subunit alpha (AccA) and ACCase subunit beta (AccD).

It localises to the cytoplasm. It carries out the reaction N(6)-carboxybiotinyl-L-lysyl-[protein] + acetyl-CoA = N(6)-biotinyl-L-lysyl-[protein] + malonyl-CoA. It participates in lipid metabolism; malonyl-CoA biosynthesis; malonyl-CoA from acetyl-CoA: step 1/1. Its function is as follows. Component of the acetyl coenzyme A carboxylase (ACC) complex. First, biotin carboxylase catalyzes the carboxylation of biotin on its carrier protein (BCCP) and then the CO(2) group is transferred by the carboxyltransferase to acetyl-CoA to form malonyl-CoA. The protein is Acetyl-coenzyme A carboxylase carboxyl transferase subunit alpha of Nitrobacter hamburgensis (strain DSM 10229 / NCIMB 13809 / X14).